A 1460-amino-acid chain; its full sequence is Probable outer membrane protein PmpC (1460 aa).

The N-terminal stretch at 1-20 (MKFLSATAVFAAALPSITSA) is a signal peptide. Disordered stretches follow at residues 21-48 (SSVE…FTEI), 92-212 (SEEN…PDKD), 279-372 (TPPA…ESGS), 455-549 (TPEE…DSSI), and 993-1021 (VDTS…TAQA). A compositionally biased stretch (low complexity) spans 34 to 44 (SSRTGSSSSQS). A compositionally biased stretch (polar residues) spans 97 to 114 (QASFQDSAQNQTENASEG). Positions 115 to 137 (NSPNSENTNQSSTTETESITTDE) are enriched in low complexity. Residues 138–155 (QVQNDNESAASVPTTVET) show a composition bias toward polar residues. Positions 290 to 327 (NDPSGSNGNDGSDDSNSSGNTDSNESNPNNSASNNTGS) are enriched in low complexity. Residues 328–358 (ENELSSSTPSAQLPNPATPFLSSVSTNSQPI) show a composition bias toward polar residues. Residues 461-471 (LKSSQLNNQNP) show a composition bias toward low complexity. A compositionally biased stretch (polar residues) spans 487–501 (SLETSPITNQDSASS). 2 stretches are compositionally biased toward low complexity: residues 504-548 (AIFR…SDSS) and 995-1018 (TSTN…STPT). An Autotransporter domain is found at 1167-1460 (DEVAYNNLWI…MINCGARMTF (294 aa)).

It belongs to the PMP outer membrane protein family.

The protein resides in the secreted. It is found in the cell wall. The protein localises to the cell outer membrane. This Chlamydia muridarum (strain MoPn / Nigg) protein is Probable outer membrane protein PmpC (pmpC).